Reading from the N-terminus, the 351-residue chain is Palmitoyltransferase spe-10 (351 aa).

The next 4 membrane-spanning stretches (helical) occupy residues T21 to S43, I60 to L80, Y198 to L218, and L241 to F261. Residues K154–I204 form the DHHC domain.

This sequence belongs to the DHHC palmitoyltransferase family. Expressed during spermatogenesis in budding and budded spermatids.

The protein localises to the membrane. It catalyses the reaction L-cysteinyl-[protein] + hexadecanoyl-CoA = S-hexadecanoyl-L-cysteinyl-[protein] + CoA. Involved in spermatogenesis, specifically in the morphogenesis of fibrous body-membranous organelles (FB-MO), which are Golgi-derived organelles used for transporting sperm-specific components, in spermatocytes and in their localization into budding spermatids. Required for the proper formation of spermatids and spermatozoa. This Caenorhabditis elegans protein is Palmitoyltransferase spe-10.